The following is a 356-amino-acid chain: MNLHRISSEPKCKCLNHEIQNARLHYGRFAVYPLFPGQAITIGTAIRRALLGEVHSTCITSAYVVGASHEYSTLKGIRESIHDILLNLKDIVFKSDTLERQEGILLFNGPGIVTAQHIKLPPVVQVVDNTQYIARLEMPTSIEIHITLENTKTCTSLNTMPTTKGRFILDAALKPVRNMNYSIHSLGEGDMRQEMLVLEVWTNGSLTPQEVISQASQNLNDLLKPLLKVERYFQAKQNIHKKRMFTPTQSENLNMDQIEMIGGNKLIDQPLLPADSHLNSSLSLNIDNLVHLEGISIDDLQISVRASNCLKKVGIYTIRQLLSYTQQDLFQIKNLGKKSVEQIVIAIRKSYGHILG.

The alpha N-terminal domain (alpha-NTD) stretch occupies residues 1–230 (MNLHRISSEP…DLLKPLLKVE (230 aa)). The segment at 267–356 (IDQPLLPADS…IRKSYGHILG (90 aa)) is alpha C-terminal domain (alpha-CTD).

It belongs to the RNA polymerase alpha chain family. As to quaternary structure, in plastids the minimal PEP RNA polymerase catalytic core is composed of four subunits: alpha, beta, beta', and beta''. When a (nuclear-encoded) sigma factor is associated with the core the holoenzyme is formed, which can initiate transcription.

Its subcellular location is the plastid. The protein localises to the chloroplast. The catalysed reaction is RNA(n) + a ribonucleoside 5'-triphosphate = RNA(n+1) + diphosphate. Its function is as follows. DNA-dependent RNA polymerase catalyzes the transcription of DNA into RNA using the four ribonucleoside triphosphates as substrates. In Zygnema circumcarinatum (Green alga), this protein is DNA-directed RNA polymerase subunit alpha.